The following is an 842-amino-acid chain: Leucine--tRNA ligase (842 aa).

The 'HIGH' region signature appears at 44–55; it reads PYPSANGLHVGH. Positions 619-623 match the 'KMSKS' region motif; it reads KMSKS. Lysine 622 lines the ATP pocket.

This sequence belongs to the class-I aminoacyl-tRNA synthetase family.

Its subcellular location is the cytoplasm. The catalysed reaction is tRNA(Leu) + L-leucine + ATP = L-leucyl-tRNA(Leu) + AMP + diphosphate. The protein is Leucine--tRNA ligase of Borrelia recurrentis (strain A1).